The primary structure comprises 101 residues: Small ribosomal subunit protein uS14 (101 aa).

The protein belongs to the universal ribosomal protein uS14 family. Part of the 30S ribosomal subunit. Contacts proteins S3 and S10.

In terms of biological role, binds 16S rRNA, required for the assembly of 30S particles and may also be responsible for determining the conformation of the 16S rRNA at the A site. The protein is Small ribosomal subunit protein uS14 of Cronobacter sakazakii (strain ATCC BAA-894) (Enterobacter sakazakii).